Here is a 1393-residue protein sequence, read N- to C-terminus: Protein strawberry notch homolog 1 (1393 aa).

The interval 129-148 (STRPSVSAPTVRNAMTSAPS) is disordered. At Ser-148 the chain carries Phosphoserine. N6-acetyllysine is present on Lys-149. Phosphoserine is present on residues Ser-162 and Ser-214. Lys-413 bears the N6-acetyllysine mark. The segment at 687–840 (APSNNSSPRD…ANSNTNSNSS (154 aa)) is disordered. Ser-692, Ser-693, and Ser-697 each carry phosphoserine. Residues 697–716 (SPCKENKIKKRKGEEITREA) are compositionally biased toward basic and acidic residues. Residues 733 to 747 (SGSESDASDNEESDY) show a composition bias toward acidic residues. Ser-754, Ser-755, and Ser-768 each carry phosphoserine. A compositionally biased stretch (acidic residues) spans 756-775 (GDDDDFNPFLDESNEDDEND). Residues 781–793 (KDHKKNKEKKKKK) show a composition bias toward basic residues. Residues Ser-794 and Ser-815 each carry the phosphoserine modification. A compositionally biased stretch (low complexity) spans 824-840 (PAPNSTPANSNTNSNSS). A coiled-coil region spans residues 843 to 870 (TSQDAVERAQQMKKDLLDKLEKLAEDLP). Lys-1222 carries the N6-acetyllysine modification. At Ser-1386 the chain carries Phosphoserine.

Belongs to the SBNO family.

It is found in the nucleus. Its function is as follows. Plays a crucial role in the regulation of neural stem cells (NSCs) proliferation. Enhances the phosphorylation of GSK3B through the PI3K-Akt signaling pathway, thereby upregulating the Wnt/beta-catenin signaling pathway and promoting the proliferation of NSCs. Improves ischemic stroke recovery while inhibiting neuroinflammation through small extracellular vesicles (sEVs)-mediated mechanism. Enhances the secretion of sEVs from NSCs, which in turn inhibit both the MAPK and NF-kappaB pathways in microglia. This inhibition suppresses the pro-inflammatory M1 polarization of microglia, promoting a shift towards the M2 anti-inflammatory phenotype, which is beneficial for reducing neuroinflammation. The protein is Protein strawberry notch homolog 1 (SBNO1) of Homo sapiens (Human).